Consider the following 80-residue polypeptide: Defensin-like protein 46 (80 aa).

Positions 1 to 27 are cleaved as a signal peptide; sequence MGSTKTLVTCFLTIILAVSLSNHNVLA. 4 cysteine pairs are disulfide-bonded: cysteine 40–cysteine 78, cysteine 44–cysteine 65, cysteine 50–cysteine 76, and cysteine 54–cysteine 77.

The protein belongs to the DEFL family.

It localises to the secreted. This is Defensin-like protein 46 from Arabidopsis thaliana (Mouse-ear cress).